Reading from the N-terminus, the 390-residue chain is Peroxisomal sarcosine oxidase (390 aa).

9–39 (DAIVIGAGIQGCFTAYHLAKHSKSVLLLEQF) is an FAD binding site. An N6-acetyllysine mark is found at Lys-126 and Lys-287. Cys-319 bears the S-8alpha-FAD cysteine mark. Residues 388–390 (AHL) carry the Microbody targeting signal motif.

It belongs to the MSOX/MTOX family. FAD is required as a cofactor. In terms of tissue distribution, kidney and liver.

The protein localises to the peroxisome. It carries out the reaction sarcosine + O2 + H2O = formaldehyde + glycine + H2O2. It catalyses the reaction L-pipecolate + O2 = L-1-piperideine-6-carboxylate + H2O2 + H(+). In terms of biological role, metabolizes sarcosine, L-pipecolic acid and L-proline. This is Peroxisomal sarcosine oxidase (Pipox) from Mus musculus (Mouse).